The primary structure comprises 193 residues: Recombination protein RecR (193 aa).

The segment at 61-76 adopts a C4-type zinc-finger fold; that stretch reads CTSCNALSESEVCEIC. The Toprim domain occupies 84 to 170; sequence SQLCMVLHPR…TFTKIAQGVP (87 aa).

It belongs to the RecR family.

In terms of biological role, may play a role in DNA repair. It seems to be involved in an RecBC-independent recombinational process of DNA repair. It may act with RecF and RecO. This is Recombination protein RecR from Helicobacter pylori (strain HPAG1).